A 379-amino-acid polypeptide reads, in one-letter code: Sterol 24-C-methyltransferase erg-4 (379 aa).

It belongs to the class I-like SAM-binding methyltransferase superfamily. Erg6/SMT family.

It carries out the reaction lanosterol + S-adenosyl-L-methionine = eburicol + S-adenosyl-L-homocysteine + H(+). It participates in steroid metabolism; ergosterol biosynthesis. Its function is as follows. Catalyzes the methyl transfer from S-adenosyl-methionine to the C-24 of lanosterol to form eburicol. The polypeptide is Sterol 24-C-methyltransferase erg-4 (Neurospora crassa (strain ATCC 24698 / 74-OR23-1A / CBS 708.71 / DSM 1257 / FGSC 987)).